The chain runs to 473 residues: Lactate utilization protein B (473 aa).

4Fe-4S ferredoxin-type domains are found at residues 302–332 (GSEF…GHSY) and 351–380 (YDDY…LHDL). Cysteine 311, cysteine 314, cysteine 317, cysteine 321, cysteine 364, cysteine 367, and cysteine 371 together coordinate [4Fe-4S] cluster.

The protein belongs to the LutB/YkgF family.

Functionally, is involved in L-lactate degradation and allows cells to grow with lactate as the sole carbon source. Has probably a role as an electron transporter during oxidation of L-lactate. This Bacillus cytotoxicus (strain DSM 22905 / CIP 110041 / 391-98 / NVH 391-98) protein is Lactate utilization protein B.